The following is a 702-amino-acid chain: Arylphorin (702 aa).

A signal peptide spans 1–16 (MQTVLFLAALVSLAAA). Asn-211 and Asn-481 each carry an N-linked (GlcNAc...) asparagine glycan.

This sequence belongs to the hemocyanin family. As to expression, hemolymph.

The protein resides in the secreted. In terms of biological role, larval storage protein (LSP) which may serve as a store of amino acids for synthesis of adult proteins. Binds the A.niger cell wall component alpha-1,3-glucan, a fungal pathogen-associated molecular pattern (PAMP) that activates the host immune response. This chain is Arylphorin (LOC113516268), found in Galleria mellonella (Greater wax moth).